The sequence spans 49 residues: Photosystem I reaction center subunit IX (49 aa).

A helical transmembrane segment spans residues 14–34 (FISTAPVAATIWLTITAGILI).

This sequence belongs to the PsaJ family.

Its subcellular location is the cellular thylakoid membrane. Its function is as follows. May help in the organization of the PsaE and PsaF subunits. The chain is Photosystem I reaction center subunit IX from Nostoc punctiforme (strain ATCC 29133 / PCC 73102).